A 445-amino-acid polypeptide reads, in one-letter code: MSKLPGELARDLECSLPAVASLGSSLSHSQSLSSHLLPPPEKRRAISDVRRTFCLFVTFDLLFISLLWIIELNTNTGIRKNLEQEIIQYNFKTSFFDIFVLAFFRFSGLLLGYAVLRLQHWWVIAVTTLVSSAFLIVKVILSELLSKGAFGYLLPIVSFVLAWLETWFLDFKVLPQEAEEERWYLAAQAAVARGPLLFSGALSEGQFYSPPESFAGSDNESDEEVAGKKSFSAQEREYIRQGKEATAVVDQILAQEENWKFEKNNEYGDTVYTIEVPFHGKTFILKTFLPCPAELVYQEVILQPERMVLWNKTVTACQILQRVEDNTLISYDVSAGAAGGMVSPRDFVNVRRIERRRDRYLSSGIATAHSAKPLTHKYVRGENGPGGFVVLKSASNPCVCTFVWILNTDLKGRLPRYLIHQSLAATMFEFAFHLRQRISELGARA.

Over 1–51 (MSKLPGELARDLECSLPAVASLGSSLSHSQSLSSHLLPPPEKRRAISDVRR) the chain is Cytoplasmic. The region spanning 46–217 (ISDVRRTFCL…YSPPESFAGS (172 aa)) is the MENTAL domain. The helical transmembrane segment at 52 to 72 (TFCLFVTFDLLFISLLWIIEL) threads the bilayer. At 73 to 94 (NTNTGIRKNLEQEIIQYNFKTS) the chain is on the extracellular side. The chain crosses the membrane as a helical span at residues 95-115 (FFDIFVLAFFRFSGLLLGYAV). Topologically, residues 116–120 (LRLQH) are cytoplasmic. The helical transmembrane segment at 121-141 (WWVIAVTTLVSSAFLIVKVIL) threads the bilayer. At 142-148 (SELLSKG) the chain is on the extracellular side. A helical membrane pass occupies residues 149–169 (AFGYLLPIVSFVLAWLETWFL). At 170–445 (DFKVLPQEAE…QRISELGARA (276 aa)) the chain is on the cytoplasmic side. 2 short sequence motifs (FFAT) span residues 206–212 (QFYSPPE) and 207–212 (FYSPPE). A phosphoserine mark is found at Ser209, Ser217, and Ser221. An START domain is found at 248–443 (VVDQILAQEE…LRQRISELGA (196 aa)).

It belongs to the STARD3 family. As to quaternary structure, homodimer. Interacts (via the MENTAL domain) with STARD3NL. Interacts (via phosphorylated FFAT motif) with VAPA (via MSP domain). Interacts (via phosphorylated FFAT motif) with VAPB (via MSP domain). Interacts (via phosphorylated FFAT motif) with MOSPD2 (via MSP domain); this interaction allows enrichment of MOSPD2 around endosomes. In terms of processing, phosphorylation at Ser-209 is necessary and sufficient for the direct interaction of the phosphorylated FFAT motif with the MSP domain of MOSPD2, VAPA and VAPB and allows the tethering of two membranes that participates in the formation of ER-endosome contacts. Phosphorylation of the FFAT motif leads to conformation changes. Additional phosphorylations around the core FFAT motif (QFYSPPE) are not essential but strengthen the interaction with MOSPD2, VAPA and VAPB. Phosphorylation at Ser-209 of FFAT motif drives membrane tethering between the endoplasmic reticulum and late endosomes via interaction with VAPA and VAPB that in turn allows the efficient transport of sterol mediated by the START domain. In terms of tissue distribution, present in retina. Localizes to all neurons of macular retina and especially cone inner segments and axons (at protein level).

The protein resides in the late endosome membrane. It carries out the reaction cholesterol(in) = cholesterol(out). In terms of biological role, sterol-binding protein that mediates cholesterol transport from the endoplasmic reticulum to endosomes. The sterol transport mechanism is triggered by phosphorylation of FFAT motif that leads to membrane tethering between the endoplasmic reticulum and late endosomes via interaction with VAPA and VAPB. Acts as a lipid transfer protein that redirects sterol to the endosome at the expense of the cell membrane and favors membrane formation inside endosomes. May also mediate cholesterol transport between other membranes, such as mitochondria membrane or cell membrane. However, such results need additional experimental evidences; probably mainly mediates cholesterol transport from the endoplasmic reticulum to endosomes. Does not activate transcriptional cholesterol sensing. Able to bind other lipids, such as lutein, a xanthophyll carotenoids that form the macular pigment of the retina. Able to bind other lipids, such as lutein, a xanthophyll carotenoids that form the macular pigment of the retina. This is StAR-related lipid transfer protein 3 from Macaca mulatta (Rhesus macaque).